The primary structure comprises 264 residues: MALLQLERISAQYPGSPEPVLSDISLTLGPQQLLVALGPSGSGKTSLLNLIAGFVEPSAGRITLDNVPVKGPSAERGVVFQDDALLPWQDVLANVAFGLELAGVAKDKREQRAREMLALVDLSGFEHRRIWQLSGGQKQRVGLARALAADPRVLLMDEPFGALDAFTREQMQELLLQVWQRTAKPVFLITHDIEEAVFLATDLILLAPNPGQIVERLHLDFGQRYAAGESARAIKSDPRFIETREHVLAKVFSQRSAVQRQERA.

An ABC transporter domain is found at 4–233; sequence LQLERISAQY…RYAAGESARA (230 aa). ATP is bound at residue 38–45; sequence GPSGSGKT.

It belongs to the ABC transporter superfamily. Taurine importer (TC 3.A.1.17.1) family. The complex is composed of two ATP-binding proteins (TauB), two transmembrane proteins (TauC) and a solute-binding protein (TauA).

Its subcellular location is the cell inner membrane. The enzyme catalyses taurine(out) + ATP + H2O = taurine(in) + ADP + phosphate + H(+). Part of the ABC transporter complex TauABC involved in taurine import. Responsible for energy coupling to the transport system. The polypeptide is Taurine import ATP-binding protein TauB (Pseudomonas fluorescens (strain Pf0-1)).